Consider the following 225-residue polypeptide: GTP:AMP phosphotransferase, mitochondrial (225 aa).

24–29 contributes to the GTP binding site; that stretch reads GSGKGT. The tract at residues 45 to 74 is NMP; the sequence is SSGDILRQEIKSESTLGREATTYIAQGKLL. AMP-binding positions include Ser-46, Arg-51, 72–74, 103–106, and Gln-110; these read KLL and GFPR. The tract at residues 144 to 181 is LID; sequence NRYVHVPSGRVYNLQYNPPKVPGLDDITGEPLTKRLDD. Residues Arg-145 and 154-155 each bind GTP; that span reads VY. Residues Arg-178 and Arg-189 each contribute to the AMP site. Residue Ser-218 coordinates GTP.

The protein belongs to the adenylate kinase family. AK3 subfamily. Monomer.

The protein resides in the mitochondrion matrix. The catalysed reaction is a ribonucleoside 5'-triphosphate + AMP = a ribonucleoside 5'-diphosphate + ADP. Functionally, involved in maintaining the homeostasis of cellular nucleotides by catalyzing the interconversion of nucleoside phosphates. Has GTP:AMP phosphotransferase and ITP:AMP phosphotransferase activities. Does not accept ATP as phosphate donor. The chain is GTP:AMP phosphotransferase, mitochondrial from Saccharomyces cerevisiae (strain ATCC 204508 / S288c) (Baker's yeast).